We begin with the raw amino-acid sequence, 283 residues long: Bifunctional protein FolD (283 aa).

Residues 166–168 (GRS), S191, and I232 each bind NADP(+).

Belongs to the tetrahydrofolate dehydrogenase/cyclohydrolase family. As to quaternary structure, homodimer.

The catalysed reaction is (6R)-5,10-methylene-5,6,7,8-tetrahydrofolate + NADP(+) = (6R)-5,10-methenyltetrahydrofolate + NADPH. It catalyses the reaction (6R)-5,10-methenyltetrahydrofolate + H2O = (6R)-10-formyltetrahydrofolate + H(+). It participates in one-carbon metabolism; tetrahydrofolate interconversion. In terms of biological role, catalyzes the oxidation of 5,10-methylenetetrahydrofolate to 5,10-methenyltetrahydrofolate and then the hydrolysis of 5,10-methenyltetrahydrofolate to 10-formyltetrahydrofolate. The polypeptide is Bifunctional protein FolD (Rickettsia bellii (strain RML369-C)).